Here is a 471-residue protein sequence, read N- to C-terminus: Cytochrome b-c1 complex subunit 1, mitochondrial (471 aa).

It belongs to the peptidase M16 family.

Its subcellular location is the mitochondrion matrix. The protein is Cytochrome b-c1 complex subunit 1, mitochondrial (ucr-1) of Caenorhabditis elegans.